The following is a 102-amino-acid chain: Small ribosomal subunit protein uS10 (102 aa).

It belongs to the universal ribosomal protein uS10 family. In terms of assembly, part of the 30S ribosomal subunit.

In terms of biological role, involved in the binding of tRNA to the ribosomes. This is Small ribosomal subunit protein uS10 from Thermosipho africanus (strain TCF52B).